We begin with the raw amino-acid sequence, 380 residues long: Acyl-coenzyme A diphosphatase NUDT19 (380 aa).

The Nudix hydrolase domain maps to 8 to 264 (WKEAATLIVA…KIWIPPPQFY (257 aa)). The Nudix box signature appears at 115-136 (SLIPGEVATRICAIRETFEESG). Residues glutamate 130 and glutamate 134 each coordinate Mg(2+). The short motif at 378 to 380 (NKL) is the Microbody targeting signal element.

The protein belongs to the Nudix hydrolase family. Monomer. Mg(2+) is required as a cofactor. The cofactor is Mn(2+).

Its subcellular location is the peroxisome. The enzyme catalyses an acyl-CoA + H2O = an acyl-4'-phosphopantetheine + adenosine 3',5'-bisphosphate + 2 H(+). It catalyses the reaction CoA + H2O = (R)-4'-phosphopantetheine + adenosine 3',5'-bisphosphate + 2 H(+). The catalysed reaction is hexanoyl-CoA + H2O = hexanoyl-4'-phosphopantetheine + adenosine 3',5'-bisphosphate + 2 H(+). It carries out the reaction octanoyl-CoA + H2O = S-octanoyl-4'-phosphopantetheine + adenosine 3',5'-bisphosphate + 2 H(+). The enzyme catalyses butanoyl-CoA + H2O = S-butanoyl-4'-phosphopantetheine + adenosine 3',5'-bisphosphate + 2 H(+). It catalyses the reaction propanoyl-CoA + H2O = propanoyl-4'-phosphopantetheine + adenosine 3',5'-bisphosphate + 2 H(+). The catalysed reaction is malonyl-CoA + H2O = malonyl-4'-phosphopantetheine + adenosine 3',5'-bisphosphate + 2 H(+). It carries out the reaction succinyl-CoA + H2O = succinyl-4'-phosphopantetheine + adenosine 3',5'-bisphosphate + 2 H(+). The enzyme catalyses choloyl-CoA + H2O = S-choloyl-4'-phosphopantetheine + adenosine 3',5'-bisphosphate + 2 H(+). It catalyses the reaction 4,8-dimethylnonanoyl-CoA + H2O = S-(4,8-dimethylnonanoyl)-4'-phosphopantetheine + adenosine 3',5'-bisphosphate + 2 H(+). The catalysed reaction is (9Z,12Z,15Z)-octadecatrienoyl-CoA + H2O = S-(9Z,12Z,15Z-octadecatrienoyl)-4'-phosphopantetheine + adenosine 3',5'-bisphosphate + 2 H(+). It carries out the reaction (9Z,12Z)-octadecadienoyl-CoA + H2O = S-(9Z,12Z-octadecadienoyl)-4'-phosphopantetheine + adenosine 3',5'-bisphosphate + 2 H(+). The enzyme catalyses (9Z)-hexadecenoyl-CoA + H2O = S-(9Z-hexadecenoyl)-4'-phosphopantetheine + adenosine 3',5'-bisphosphate + 2 H(+). It catalyses the reaction (9Z)-tetradecenoyl-CoA + H2O = S-(9Z-tetradecenoyl)-4'-phosphopantetheine + adenosine 3',5'-bisphosphate + 2 H(+). The catalysed reaction is (6Z)-octenoyl-CoA + H2O = S-(6Z-octenoyl)-4'-phosphopantetheine + adenosine 3',5'-bisphosphate + 2 H(+). It carries out the reaction hexadecanoyl-CoA + H2O = S-hexadecanoyl-4'-phosphopantetheine + adenosine 3',5'-bisphosphate + 2 H(+). The enzyme catalyses tetradecanoyl-CoA + H2O = tetradecanoyl-4'-phosphopantetheine + adenosine 3',5'-bisphosphate + 2 H(+). It catalyses the reaction dodecanoyl-CoA + H2O = S-dodecanoyl-4'-phosphopantetheine + adenosine 3',5'-bisphosphate + 2 H(+). The catalysed reaction is a 5'-end CoA-ribonucleoside in mRNA + H2O = a 5'-end phospho-adenosine-phospho-ribonucleoside in mRNA + (R)-4'-phosphopantetheine + 2 H(+). In terms of biological role, fatty acyl-coenzyme A (CoA) diphosphatase that hydrolyzes fatty acyl-CoA to yield acyl-4'-phosphopantetheine and adenosine 3',5'-bisphosphate. Mediates the hydrolysis of a wide range of CoA esters, including choloyl-CoA and branched-chain fatty-acyl-CoA esters and at low substrate concentrations medium and long-chain fatty-acyl-CoA esters are the primary substrates. Highest activity seen with medium-chain acyl-CoA esters and higher rates of activity seen with the unsaturated acyl-CoA esters compared with the saturated esters. Exhibits decapping activity towards dpCoA-capped RNAs in vitro. This is Acyl-coenzyme A diphosphatase NUDT19 (nudt19) from Xenopus laevis (African clawed frog).